The primary structure comprises 21 residues: Large ribosomal subunit protein uL30 (21 aa).

Over residues 1–15 (AKTENKTVTVRQTAS) the composition is skewed to polar residues. The segment at 1-21 (AKTENKTVTVRQTASPIXXXK) is disordered.

The protein belongs to the universal ribosomal protein uL30 family. Part of the 50S ribosomal subunit.

This is Large ribosomal subunit protein uL30 (rpmD) from Brevundimonas diminuta (Pseudomonas diminuta).